Consider the following 159-residue polypeptide: MEGEGLLVRKIRSGVVIDHIPPGRAFTMLKALGLLPPRGYRWRIAVVINAESSKLGRKDILKIEGYKPRQRDLEVLGIIAPGATFNVIEDYKVVEKVKLKLPEESQGVLRCPNPTCITRKEREKAVSKMVLVSQDPPAYRCVYCGTTVMGDEIHDLISP.

Zn(2+)-binding residues include cysteine 111, cysteine 116, cysteine 141, and cysteine 144.

It belongs to the PyrI family. As to quaternary structure, contains catalytic and regulatory chains. The cofactor is Zn(2+).

In terms of biological role, involved in allosteric regulation of aspartate carbamoyltransferase. The polypeptide is Aspartate carbamoyltransferase regulatory chain (Aeropyrum pernix (strain ATCC 700893 / DSM 11879 / JCM 9820 / NBRC 100138 / K1)).